A 143-amino-acid chain; its full sequence is UPF0201 protein Pisl_1658 (143 aa).

This sequence belongs to the UPF0201 family.

This chain is UPF0201 protein Pisl_1658, found in Pyrobaculum islandicum (strain DSM 4184 / JCM 9189 / GEO3).